The sequence spans 1048 residues: Probable beta-glucosidase E (1048 aa).

Residues 1–54 form a disordered region; sequence MPPPPFRDAPSSAKSSQRYTPLHESIPEELNDKQYSSDADSLPLSDPSDGEDDS. The Cytoplasmic portion of the chain corresponds to 1–150; that stretch reads MPPPPFRDAP…WRTVYYSKYW (150 aa). Positions 36–47 are enriched in low complexity; that stretch reads SSDADSLPLSDP. The chain crosses the membrane as a helical; Signal-anchor for type II membrane protein span at residues 151–171; sequence WRALIGVVVVLVLLVLVFLGL. Residues 172–1048 lie on the Extracellular side of the membrane; it reads ARSKQVGDEL…SRDLPLHGKY (877 aa). N-linked (GlcNAc...) asparagine glycans are attached at residues Asn-216, Asn-224, and Asn-410. Asp-438 is an active-site residue. 5 N-linked (GlcNAc...) asparagine glycosylation sites follow: Asn-481, Asn-520, Asn-578, Asn-895, and Asn-991. The tract at residues 508 to 527 is disordered; it reads WERPPPDGEGGPNFSSWTDD.

It belongs to the glycosyl hydrolase 3 family.

It localises to the cell membrane. The catalysed reaction is Hydrolysis of terminal, non-reducing beta-D-glucosyl residues with release of beta-D-glucose.. The protein operates within glycan metabolism; cellulose degradation. Its function is as follows. Beta-glucosidases are one of a number of cellulolytic enzymes involved in the degradation of cellulosic biomass. Catalyzes the last step releasing glucose from the inhibitory cellobiose. This Aspergillus oryzae (strain ATCC 42149 / RIB 40) (Yellow koji mold) protein is Probable beta-glucosidase E (bglE).